The following is a 132-amino-acid chain: Evasin P985 (132 aa).

An N-terminal signal peptide occupies residues 1 to 24; it reads MHSTIAYVSLLPLALFVAMHGAST. Residues N45, N69, N74, N103, N111, and N117 are each glycosylated (N-linked (GlcNAc...) asparagine). Intrachain disulfides connect C48-C70, C66-C109, C83-C114, and C104-C123.

The protein localises to the secreted. Salivary chemokine-binding protein which binds to host chemokine CCL5. This chain is Evasin P985, found in Amblyomma parvum (South American tick).